The chain runs to 592 residues: MITGADFYHVMTAMVPLYVAMILAYGSVKWWRIFTPDQCSGINRFVALFAVPLLSFHFISTNNPYTMNLRFIAADTLQKLIVLALLTLWSHLSRRGSLEWTITLFSLSTLPNTLVMGIPLLKGMYGEFSGSLMVQIVVLQCIIWYTLMLFMFEYRGARILITEQFPDTAGAIASIVVDADVVSLDGRRDMIETEAEVKEDGKIHVTVRRSNASRSDVYSRRSMGFSSTTPRPSNLTNAEIYSLQSSRNPTPRGSSFNHTDFYSMVGRSSNFAAGDAFGVRTGATPRPSNYEEDAAAPNKAGSKYGQYPAPNPAMAAPPKPKKAANGQAKGEDGKDLHMFVWSSSASPVSDVFGNGAEYNDAAAVKEVRMAVASPRKADGVERDDFSFGNRGVAERDAEAGDEKSVAAAVSGEHGKPGLTPAPTAMPPTSVMTRLILIMVWRKLIRNPNTYSSLIGLIWSLVCFRWNFEMPAIILKSISILSDAGLGMAMFSLGLFMALQPRIIACGNKVATFAMAVRFLTGPAVMAAASIAVGLRGTLLHVAIVQAALPQGIVPFVFAKEYSVHPDILSTAVIFGMLIALPITLVYYILLGL.

The Extracellular segment spans residues Met-1–Asp-6. The chain crosses the membrane as a helical span at residues Phe-7–Ser-27. Over Val-28–Gln-38 the chain is Cytoplasmic. Residues Cys-39–Ile-59 form a helical membrane-spanning segment. Val-51 provides a ligand contact to (indol-3-yl)acetate. The Extracellular segment spans residues Ser-60–Arg-70. Residues Phe-71–His-91 traverse the membrane as a helical segment. Residues Leu-92 to Trp-100 are Cytoplasmic-facing. The chain crosses the membrane as a helical span at residues Thr-101–Leu-121. Asn-112 and Leu-114 together coordinate (indol-3-yl)acetate. Residues Lys-122–Ser-131 lie on the Extracellular side of the membrane. Residues Leu-132–Phe-152 traverse the membrane as a helical segment. Tyr-145 provides a ligand contact to (indol-3-yl)acetate. Topologically, residues Glu-153 to Ser-452 are cytoplasmic. 2 disordered regions span residues Arg-214–Thr-236 and Gly-282–Glu-331. A compositionally biased stretch (polar residues) spans Gly-224–Thr-236. Positions Ala-309–Pro-318 are enriched in pro residues. Residues Leu-453–Ile-473 traverse the membrane as a helical segment. Residues Leu-474–Ser-476 lie on the Extracellular side of the membrane. A helical membrane pass occupies residues Ile-477–Ala-497. The Cytoplasmic segment spans residues Leu-498 to Thr-511. A helical membrane pass occupies residues Phe-512–Val-532. At Gly-533 to Thr-537 the chain is on the extracellular side. The helical transmembrane segment at Leu-538–Ala-558 threads the bilayer. Residues Ile-552 and Val-553 each contribute to the (indol-3-yl)acetate site. The Cytoplasmic portion of the chain corresponds to Lys-559–Ala-571. The chain crosses the membrane as a helical span at residues Val-572 to Leu-592.

The protein belongs to the auxin efflux carrier (TC 2.A.69.1) family. As to quaternary structure, homodimer. As to expression, expressed at low levels in roots and leaves. Expressed in roots, stem bases, stems, leaves and young panicles.

The protein resides in the membrane. Its function is as follows. May act as a component of the auxin efflux carrier. In Oryza sativa subsp. japonica (Rice), this protein is Probable auxin efflux carrier component 1c.